We begin with the raw amino-acid sequence, 349 residues long: GTP 3',8-cyclase (349 aa).

One can recognise a Radical SAM core domain in the interval 24-249 (PFGRAVTYLR…KDMSYRTGGP (226 aa)). Residue Arg-33 participates in GTP binding. Cys-40 and Cys-44 together coordinate [4Fe-4S] cluster. Tyr-46 contributes to the S-adenosyl-L-methionine binding site. Cys-47 lines the [4Fe-4S] cluster pocket. Residue Arg-82 participates in GTP binding. Gly-86 lines the S-adenosyl-L-methionine pocket. A GTP-binding site is contributed by Thr-116. S-adenosyl-L-methionine is bound at residue Ser-140. Lys-176 is a binding site for GTP. Residue Met-210 coordinates S-adenosyl-L-methionine. 2 residues coordinate [4Fe-4S] cluster: Cys-273 and Cys-276. 278–280 (RVR) contributes to the GTP binding site. Position 290 (Cys-290) interacts with [4Fe-4S] cluster.

Belongs to the radical SAM superfamily. MoaA family. In terms of assembly, monomer and homodimer. Requires [4Fe-4S] cluster as cofactor.

The enzyme catalyses GTP + AH2 + S-adenosyl-L-methionine = (8S)-3',8-cyclo-7,8-dihydroguanosine 5'-triphosphate + 5'-deoxyadenosine + L-methionine + A + H(+). It functions in the pathway cofactor biosynthesis; molybdopterin biosynthesis. In terms of biological role, catalyzes the cyclization of GTP to (8S)-3',8-cyclo-7,8-dihydroguanosine 5'-triphosphate. The chain is GTP 3',8-cyclase from Sinorhizobium medicae (strain WSM419) (Ensifer medicae).